The chain runs to 689 residues: Glycine--tRNA ligase beta subunit (689 aa).

Belongs to the class-II aminoacyl-tRNA synthetase family. In terms of assembly, tetramer of two alpha and two beta subunits.

It is found in the cytoplasm. It catalyses the reaction tRNA(Gly) + glycine + ATP = glycyl-tRNA(Gly) + AMP + diphosphate. The sequence is that of Glycine--tRNA ligase beta subunit from Shewanella baltica (strain OS195).